We begin with the raw amino-acid sequence, 109 residues long: Spermidine export protein MdtI (109 aa).

The next 4 helical transmembrane spans lie at Phe6–Leu26, Trp36–Val56, Ala64–Phe84, and Leu88–Leu108.

It belongs to the drug/metabolite transporter (DMT) superfamily. Small multidrug resistance (SMR) (TC 2.A.7.1) family. MdtI subfamily. In terms of assembly, forms a complex with MdtJ.

It localises to the cell inner membrane. In terms of biological role, catalyzes the excretion of spermidine. The polypeptide is Spermidine export protein MdtI (Yersinia pseudotuberculosis serotype O:1b (strain IP 31758)).